Consider the following 177-residue polypeptide: Large ribosomal subunit protein uL6 (177 aa).

The protein belongs to the universal ribosomal protein uL6 family. Part of the 50S ribosomal subunit.

Functionally, this protein binds to the 23S rRNA, and is important in its secondary structure. It is located near the subunit interface in the base of the L7/L12 stalk, and near the tRNA binding site of the peptidyltransferase center. The chain is Large ribosomal subunit protein uL6 from Methylocella silvestris (strain DSM 15510 / CIP 108128 / LMG 27833 / NCIMB 13906 / BL2).